The following is a 54-amino-acid chain: MSKNKQDAGLSTSAGLVRYMDEDASKIKIAPEKVLGITISIMVLLFILNYGLLA.

Residues 1–30 (MSKNKQDAGLSTSAGLVRYMDEDASKIKIA) lie on the Cytoplasmic side of the membrane. A helical membrane pass occupies residues 31 to 52 (PEKVLGITISIMVLLFILNYGL). Topologically, residues 53–54 (LA) are extracellular.

The protein belongs to the SEC61-beta family. Component of the protein translocase complex. Heterotrimer consisting of alpha (SecY), beta (SecG) and gamma (SecE) subunits. Can form oligomers of the heterotrimer.

The protein resides in the cell membrane. Its function is as follows. Involved in protein export. The function of the beta subunit is unknown, but it may be involved in stabilization of the trimeric complex. The chain is Preprotein translocase subunit SecG from Methanococcus aeolicus (strain ATCC BAA-1280 / DSM 17508 / OCM 812 / Nankai-3).